A 512-amino-acid chain; its full sequence is 2-isopropylmalate synthase (512 aa).

The Pyruvate carboxyltransferase domain maps to 5–267 (LYIFDTTLRD…DSRVDATQIV (263 aa)). Residues Asp-14, His-202, His-204, and Asn-238 each coordinate Mn(2+). The tract at residues 393–512 (KLVSLKVVSE…EEKMNAQAAA (120 aa)) is regulatory domain.

This sequence belongs to the alpha-IPM synthase/homocitrate synthase family. LeuA type 1 subfamily. In terms of assembly, homodimer. Mn(2+) serves as cofactor.

The protein localises to the cytoplasm. The catalysed reaction is 3-methyl-2-oxobutanoate + acetyl-CoA + H2O = (2S)-2-isopropylmalate + CoA + H(+). It functions in the pathway amino-acid biosynthesis; L-leucine biosynthesis; L-leucine from 3-methyl-2-oxobutanoate: step 1/4. Its function is as follows. Catalyzes the condensation of the acetyl group of acetyl-CoA with 3-methyl-2-oxobutanoate (2-ketoisovalerate) to form 3-carboxy-3-hydroxy-4-methylpentanoate (2-isopropylmalate). This is 2-isopropylmalate synthase from Chromobacterium violaceum (strain ATCC 12472 / DSM 30191 / JCM 1249 / CCUG 213 / NBRC 12614 / NCIMB 9131 / NCTC 9757 / MK).